Reading from the N-terminus, the 200-residue chain is Vacuolar iron transporter homolog 1 (200 aa).

The Cytoplasmic segment spans residues 1–34 (MESHNVSNSLNLDMEMDQEKAFDYSKRAQWLRAA). A helical transmembrane segment spans residues 35–55 (VLGANDGLVSTASLMMGVGAV). At 56-62 (KQDVKVM) the chain is on the vacuolar side. The chain crosses the membrane as a helical span at residues 63–83 (ILSGFAGLVAGACSMAIGEFV). Residues 84 to 116 (SVYSQYDIEVAQMKRENGGQVEKEKLPSPMQAA) lie on the Cytoplasmic side of the membrane. A helical membrane pass occupies residues 117-137 (AASALAFSLGAIVPLMAAAFV). Topologically, residues 138 to 143 (KDYHVR) are vacuolar. A helical membrane pass occupies residues 144 to 164 (IGAIVAAVTLALVMFGWLGAV). The Cytoplasmic segment spans residues 165–176 (LGKAPVFKSSAR). Residues 177–197 (VLIGGWLAMAVTFGLTKLIGT) traverse the membrane as a helical segment. Residues 198–200 (HSL) are Vacuolar-facing.

Belongs to the CCC1 family. As to expression, expressed in the vascular bundles of the shoot and the stele of the root. Expressed in inflorescences and at lower levels in leaves.

It localises to the vacuole membrane. It catalyses the reaction Fe(2+)(in) = Fe(2+)(out). In terms of biological role, vacuolar iron transporter involved in the transfer of iron ions from the cytosol to the vacuole for intracellular iron storage. Involved in regulation of cellular iron homeostasis. Vacuolar iron storage is required for seed embryo and seedling development. The protein is Vacuolar iron transporter homolog 1 of Arabidopsis thaliana (Mouse-ear cress).